A 299-amino-acid polypeptide reads, in one-letter code: Acetylglutamate kinase (299 aa).

Substrate contacts are provided by residues 66-67 (GG), Arg88, and Asn196.

It belongs to the acetylglutamate kinase family. ArgB subfamily.

The protein resides in the cytoplasm. The catalysed reaction is N-acetyl-L-glutamate + ATP = N-acetyl-L-glutamyl 5-phosphate + ADP. The protein operates within amino-acid biosynthesis; L-arginine biosynthesis; N(2)-acetyl-L-ornithine from L-glutamate: step 2/4. Its function is as follows. Catalyzes the ATP-dependent phosphorylation of N-acetyl-L-glutamate. This Alcanivorax borkumensis (strain ATCC 700651 / DSM 11573 / NCIMB 13689 / SK2) protein is Acetylglutamate kinase.